The chain runs to 234 residues: GTP cyclohydrolase 1 (234 aa).

Residues 1-26 (MDALIKPLRAGKPDAKPADPKGTEFR) form a disordered region. Residues 11–26 (GKPDAKPADPKGTEFR) show a composition bias toward basic and acidic residues. 3 residues coordinate Zn(2+): C123, H126, and C194.

This sequence belongs to the GTP cyclohydrolase I family. In terms of assembly, toroid-shaped homodecamer, composed of two pentamers of five dimers.

It carries out the reaction GTP + H2O = 7,8-dihydroneopterin 3'-triphosphate + formate + H(+). The protein operates within cofactor biosynthesis; 7,8-dihydroneopterin triphosphate biosynthesis; 7,8-dihydroneopterin triphosphate from GTP: step 1/1. In Rhodopseudomonas palustris (strain BisB18), this protein is GTP cyclohydrolase 1.